The sequence spans 125 residues: PEP-dependent dihydroxyacetone kinase 2, phosphoryl donor subunit DhaM (125 aa).

One can recognise a PTS EIIA type-4 domain in the interval Met-1–His-125. Catalysis depends on His-9, which acts as the Tele-phosphohistidine intermediate.

This sequence belongs to the PEP-utilizing enzyme family. In terms of assembly, homodimer. The dihydroxyacetone kinase complex is composed of a homodimer of DhaM, a homodimer of DhaK and the subunit DhaL.

The protein resides in the cytoplasm. It carries out the reaction dihydroxyacetone + phosphoenolpyruvate = dihydroxyacetone phosphate + pyruvate. Its function is as follows. Component of the dihydroxyacetone kinase complex, which is responsible for the phosphoenolpyruvate (PEP)-dependent phosphorylation of dihydroxyacetone. DhaM serves as the phosphoryl donor. Is phosphorylated by phosphoenolpyruvate in an EI- and HPr-dependent reaction, and a phosphorelay system on histidine residues finally leads to phosphoryl transfer to DhaL and dihydroxyacetone. The sequence is that of PEP-dependent dihydroxyacetone kinase 2, phosphoryl donor subunit DhaM from Listeria innocua serovar 6a (strain ATCC BAA-680 / CLIP 11262).